The following is a 238-amino-acid chain: Ribonuclease PH (238 aa).

Residues Arg87 and 125-127 (GTR) each bind phosphate.

Belongs to the RNase PH family. Homohexameric ring arranged as a trimer of dimers.

It carries out the reaction tRNA(n+1) + phosphate = tRNA(n) + a ribonucleoside 5'-diphosphate. In terms of biological role, phosphorolytic 3'-5' exoribonuclease that plays an important role in tRNA 3'-end maturation. Removes nucleotide residues following the 3'-CCA terminus of tRNAs; can also add nucleotides to the ends of RNA molecules by using nucleoside diphosphates as substrates, but this may not be physiologically important. Probably plays a role in initiation of 16S rRNA degradation (leading to ribosome degradation) during starvation. This chain is Ribonuclease PH, found in Synechococcus elongatus (strain ATCC 33912 / PCC 7942 / FACHB-805) (Anacystis nidulans R2).